The chain runs to 90 residues: Accessory gland-specific peptide 26Ab (90 aa).

Residues 1–21 form the signal peptide; it reads MNYFAVLCIFSCICFWQFSDA.

As to expression, main cells of the accessory glands of males.

It localises to the secreted. The protein resides in the extracellular space. This protein is transferred from male to female during mating and may affect egglaying and behavior after mating. The polypeptide is Accessory gland-specific peptide 26Ab (Acp26Ab) (Drosophila simulans (Fruit fly)).